A 126-amino-acid chain; its full sequence is Histone H2B type 1-H (126 aa).

The span at 1–12 (MPEPAKSAPAPK) shows a compositional bias: low complexity. Positions 1–36 (MPEPAKSAPAPKKGSKKALTKAQKKDGKKRKRSRKE) are disordered. Pro-2 carries the post-translational modification N-acetylproline. Glu-3 bears the ADP-ribosyl glutamic acid mark. Lys-6 carries the N6-(2-hydroxyisobutyryl)lysine; alternate modification. Lys-6 bears the N6-(beta-hydroxybutyryl)lysine; alternate mark. Lys-6 is modified (N6-acetyllysine; alternate). Lys-6 bears the N6-butyryllysine; alternate mark. Residue Lys-6 is modified to N6-crotonyllysine; alternate. Lys-6 bears the N6-lactoyllysine; alternate mark. Lys-6 is covalently cross-linked (Glycyl lysine isopeptide (Lys-Gly) (interchain with G-Cter in SUMO2); alternate). Position 7 is an ADP-ribosylserine (Ser-7). Lys-12 carries the N6-(beta-hydroxybutyryl)lysine; alternate modification. N6-acetyllysine; alternate occurs at positions 12 and 13. N6-crotonyllysine; alternate occurs at positions 12 and 13. An N6-lactoyllysine; alternate modification is found at Lys-12. Lys-13 carries the N6-(2-hydroxyisobutyryl)lysine; alternate modification. Position 15 is a phosphoserine; by STK4/MST1 (Ser-15). N6-acetyllysine; alternate is present on residues Lys-16, Lys-17, Lys-21, and Lys-24. N6-crotonyllysine; alternate occurs at positions 16, 17, 21, and 24. Lys-16, Lys-17, Lys-21, and Lys-24 each carry N6-lactoyllysine; alternate. The residue at position 17 (Lys-17) is an N6-glutaryllysine; alternate. Residues Lys-21 and Lys-24 each carry the N6-(2-hydroxyisobutyryl)lysine; alternate modification. Lys-21 is subject to N6-(beta-hydroxybutyryl)lysine; alternate. N6-butyryllysine; alternate is present on Lys-21. Residue Lys-21 forms a Glycyl lysine isopeptide (Lys-Gly) (interchain with G-Cter in SUMO2); alternate linkage. N6-(2-hydroxyisobutyryl)lysine is present on Lys-25. The residue at position 35 (Lys-35) is an N6-(2-hydroxyisobutyryl)lysine; alternate. Lys-35 is subject to N6-(beta-hydroxybutyryl)lysine; alternate. An N6-crotonyllysine; alternate modification is found at Lys-35. Position 35 is an N6-glutaryllysine; alternate (Lys-35). Lys-35 is modified (N6-succinyllysine; alternate). Residue Lys-35 forms a Glycyl lysine isopeptide (Lys-Gly) (interchain with G-Cter in ubiquitin); alternate linkage. Residue Glu-36 is modified to PolyADP-ribosyl glutamic acid. A Phosphoserine; by AMPK modification is found at Ser-37. An N6-(2-hydroxyisobutyryl)lysine; alternate mark is found at Lys-44, Lys-47, and Lys-58. Residue Lys-44 is modified to N6-lactoyllysine; alternate. N6-glutaryllysine; alternate is present on residues Lys-44 and Lys-47. Lys-47 carries the post-translational modification N6-methyllysine; alternate. At Lys-58 the chain carries N6,N6-dimethyllysine; alternate. Arg-80 is modified (dimethylated arginine). Lys-86 carries the N6-(2-hydroxyisobutyryl)lysine; alternate modification. Lys-86 is subject to N6-acetyllysine; alternate. Lys-86 bears the N6-lactoyllysine; alternate mark. An N6,N6,N6-trimethyllysine; alternate modification is found at Lys-86. An omega-N-methylarginine mark is found at Arg-87 and Arg-93. An N6-(2-hydroxyisobutyryl)lysine; alternate modification is found at Lys-109. Lys-109 is subject to N6-(beta-hydroxybutyryl)lysine; alternate. Residue Lys-109 is modified to N6-lactoyllysine; alternate. Lys-109 is subject to N6-glutaryllysine; alternate. Lys-109 is subject to N6-methyllysine; alternate. O-linked (GlcNAc) serine glycosylation is present at Ser-113. Position 116 is a phosphothreonine (Thr-116). N6-(2-hydroxyisobutyryl)lysine; alternate occurs at positions 117 and 121. The residue at position 117 (Lys-117) is an N6-(beta-hydroxybutyryl)lysine; alternate. N6-lactoyllysine; alternate occurs at positions 117 and 121. N6-glutaryllysine; alternate occurs at positions 117 and 121. 2 positions are modified to N6-succinyllysine; alternate: Lys-117 and Lys-121. Lys-117 carries the post-translational modification N6-methylated lysine; alternate. Residue Lys-121 forms a Glycyl lysine isopeptide (Lys-Gly) (interchain with G-Cter in ubiquitin); alternate linkage.

It belongs to the histone H2B family. In terms of assembly, the nucleosome is a histone octamer containing two molecules each of H2A, H2B, H3 and H4 assembled in one H3-H4 heterotetramer and two H2A-H2B heterodimers. The octamer wraps approximately 147 bp of DNA. In terms of processing, monoubiquitination at Lys-35 (H2BK34Ub) by the MSL1/MSL2 dimer is required for histone H3 'Lys-4' (H3K4me) and 'Lys-79' (H3K79me) methylation and transcription activation at specific gene loci, such as HOXA9 and MEIS1 loci. Similarly, monoubiquitination at Lys-121 (H2BK120Ub) by the RNF20/40 complex gives a specific tag for epigenetic transcriptional activation and is also prerequisite for histone H3 'Lys-4' and 'Lys-79' methylation. It also functions cooperatively with the FACT dimer to stimulate elongation by RNA polymerase II. H2BK120Ub also acts as a regulator of mRNA splicing: deubiquitination by USP49 is required for efficient cotranscriptional splicing of a large set of exons. Phosphorylated on Ser-15 (H2BS14ph) by STK4/MST1 during apoptosis; which facilitates apoptotic chromatin condensation. Also phosphorylated on Ser-15 in response to DNA double strand breaks (DSBs), and in correlation with somatic hypermutation and immunoglobulin class-switch recombination. Phosphorylation at Ser-37 (H2BS36ph) by AMPK in response to stress promotes transcription. Post-translationally, glcNAcylation at Ser-113 promotes monoubiquitination of Lys-121. It fluctuates in response to extracellular glucose, and associates with transcribed genes. In terms of processing, ADP-ribosylated by PARP1 or PARP2 on Ser-7 (H2BS6ADPr) in response to DNA damage. H2BS6ADPr promotes recruitment of CHD1L. Mono-ADP-ribosylated on Glu-3 (H2BE2ADPr) by PARP3 in response to single-strand breaks. Poly ADP-ribosylation on Glu-36 (H2BE35ADPr) by PARP1 regulates adipogenesis: it inhibits phosphorylation at Ser-37 (H2BS36ph), thereby blocking expression of pro-adipogenetic genes. Crotonylation (Kcr) is specifically present in male germ cells and marks testis-specific genes in post-meiotic cells, including X-linked genes that escape sex chromosome inactivation in haploid cells. Crotonylation marks active promoters and enhancers and confers resistance to transcriptional repressors. It is also associated with post-meiotically activated genes on autosomes. Post-translationally, hydroxybutyrylation of histones is induced by starvation. In terms of processing, lactylated in macrophages by EP300/P300 by using lactoyl-CoA directly derived from endogenous or exogenous lactate, leading to stimulates gene transcription.

The protein resides in the nucleus. The protein localises to the chromosome. Functionally, core component of nucleosome. Nucleosomes wrap and compact DNA into chromatin, limiting DNA accessibility to the cellular machineries which require DNA as a template. Histones thereby play a central role in transcription regulation, DNA repair, DNA replication and chromosomal stability. DNA accessibility is regulated via a complex set of post-translational modifications of histones, also called histone code, and nucleosome remodeling. The protein is Histone H2B type 1-H of Mus musculus (Mouse).